The chain runs to 304 residues: Acetyl-coenzyme A carboxylase carboxyl transferase subunit beta (304 aa).

The 270-residue stretch at 25 to 294 (VWTKCDSCGQ…PSVVESKADT (270 aa)) folds into the CoA carboxyltransferase N-terminal domain. Residues cysteine 29, cysteine 32, cysteine 48, and cysteine 51 each contribute to the Zn(2+) site. The C4-type zinc-finger motif lies at 29-51 (CDSCGQVLYRAELERNLEVCPKC).

Belongs to the AccD/PCCB family. In terms of assembly, acetyl-CoA carboxylase is a heterohexamer composed of biotin carboxyl carrier protein (AccB), biotin carboxylase (AccC) and two subunits each of ACCase subunit alpha (AccA) and ACCase subunit beta (AccD). Zn(2+) is required as a cofactor.

It is found in the cytoplasm. The enzyme catalyses N(6)-carboxybiotinyl-L-lysyl-[protein] + acetyl-CoA = N(6)-biotinyl-L-lysyl-[protein] + malonyl-CoA. It functions in the pathway lipid metabolism; malonyl-CoA biosynthesis; malonyl-CoA from acetyl-CoA: step 1/1. Its function is as follows. Component of the acetyl coenzyme A carboxylase (ACC) complex. Biotin carboxylase (BC) catalyzes the carboxylation of biotin on its carrier protein (BCCP) and then the CO(2) group is transferred by the transcarboxylase to acetyl-CoA to form malonyl-CoA. The protein is Acetyl-coenzyme A carboxylase carboxyl transferase subunit beta of Yersinia pseudotuberculosis serotype O:1b (strain IP 31758).